The chain runs to 371 residues: Terpene cyclase 6 (371 aa).

Residues aspartate 144, asparagine 266, serine 270, and glutamate 274 each contribute to the Mg(2+) site. Positions 144 to 148 (DDVME) match the D(D/E)XX(D/E) motif motif. The NSE motif motif lies at 266–274 (NDLYSYDKE). The WxxxxxRY motif motif lies at 352–359 (HHATLGRY). Positions 358 and 359 each coordinate (2E,6E)-farnesyl diphosphate.

It belongs to the terpene synthase family. Homodimer. It depends on Mg(2+) as a cofactor.

It catalyses the reaction (2E,6E)-farnesyl diphosphate + H2O = (-)-alpha-acorenol + diphosphate. It functions in the pathway sesquiterpene biosynthesis. Terpene cyclase that catalyzes the cyclization of farnesyl diphosphate (FPP) to the spirocyclic sesquiterpene alpha-acorenol. The polypeptide is Terpene cyclase 6 (Gibberella fujikuroi (strain CBS 195.34 / IMI 58289 / NRRL A-6831) (Bakanae and foot rot disease fungus)).